A 328-amino-acid polypeptide reads, in one-letter code: Nucleotide-binding protein BLD_0430 (328 aa).

A disordered region spans residues 1–35 (MNQQTTNRDTGEAAATNAPANSATSTSTPDNQPTP). Residues 13–29 (AAATNAPANSATSTSTP) show a composition bias toward low complexity. Residue 46–53 (GMSGAGRS) coordinates ATP. 101-104 (DVRS) provides a ligand contact to GTP.

The protein belongs to the RapZ-like family.

Displays ATPase and GTPase activities. The protein is Nucleotide-binding protein BLD_0430 of Bifidobacterium longum (strain DJO10A).